Consider the following 279-residue polypeptide: MDDLREFAQLFPAWWFGALGVLGLIVGSFLNVVIYRLPIMLERRWRQDIELETGVADPDTRYNLWWPPSSCPHCQQAIAVKDNIPLFSWLWLRGRSRCCHQSVSVQYPLVEVITMLAFLAAGLLWLPGMALWGALILLSFLLVLTVIDIKTLLLPDELTLSLLWMGLLFNLSGTFVSLNDAVVGAMAGYLSLWLLYWAFKYATGKEALGYGDFKLLAALGAWLGWQALPNLVLVAALSGLVVTLIWRGLRKEDTAKPLAFGPWLAIGGVFGMIMNGFNL.

The Periplasmic segment spans residues 1–16; it reads MDDLREFAQLFPAWWF. Residues 17–35 form a helical membrane-spanning segment; that stretch reads GALGVLGLIVGSFLNVVIY. The Cytoplasmic portion of the chain corresponds to 36-104; it reads RLPIMLERRW…RSRCCHQSVS (69 aa). A helical transmembrane segment spans residues 105–123; sequence VQYPLVEVITMLAFLAAGL. At 124-130 the chain is on the periplasmic side; the sequence is LWLPGMA. The helical transmembrane segment at 131-149 threads the bilayer; it reads LWGALILLSFLLVLTVIDI. Residues 150 to 163 lie on the Cytoplasmic side of the membrane; it reads KTLLLPDELTLSLL. Residues 164–182 form a helical membrane-spanning segment; the sequence is WMGLLFNLSGTFVSLNDAV. The Periplasmic portion of the chain corresponds to 183 to 185; sequence VGA. Residues 186–204 form a helical membrane-spanning segment; it reads MAGYLSLWLLYWAFKYATG. Residues 205-214 lie on the Cytoplasmic side of the membrane; the sequence is KEALGYGDFK. The chain crosses the membrane as a helical span at residues 215 to 233; the sequence is LLAALGAWLGWQALPNLVL. Topologically, residues 234 to 236 are periplasmic; it reads VAA. Residues 237–254 form a helical membrane-spanning segment; it reads LSGLVVTLIWRGLRKEDT. The Cytoplasmic segment spans residues 255-257; it reads AKP. The chain crosses the membrane as a helical span at residues 258–276; the sequence is LAFGPWLAIGGVFGMIMNG. Residues 277–279 lie on the Periplasmic side of the membrane; the sequence is FNL.

The protein belongs to the peptidase A24 family.

Its subcellular location is the cell inner membrane. It carries out the reaction Typically cleaves a -Gly-|-Phe- bond to release an N-terminal, basic peptide of 5-8 residues from type IV prepilin, and then N-methylates the new N-terminal amino group, the methyl donor being S-adenosyl-L-methionine.. In terms of biological role, plays a role in type II pseudopili formation by proteolytically removing the leader sequence from substrate proteins and subsequently monomethylating the alpha-amino group of the newly exposed N-terminal phenylalanine. Substrates include proteins required for biogenesis of the type II general secretory apparatus. This Pectobacterium carotovorum subsp. carotovorum (Erwinia carotovora subsp. carotovora) protein is Prepilin leader peptidase/N-methyltransferase (outO).